The chain runs to 329 residues: Flotillin-like protein FloA (329 aa).

A run of 2 helical transmembrane segments spans residues 4-24 and 27-47; these read FIPFIILIGVAFVILSIILSF and VGLWITAQFSGVKVGIFTLVG.

It belongs to the flotillin-like FloA family. Homooligomerizes.

The protein resides in the cell membrane. The protein localises to the membrane raft. In terms of biological role, found in functional membrane microdomains (FMM) that may be equivalent to eukaryotic membrane rafts. FMMs are highly dynamic and increase in number as cells age. Flotillins are thought to be important factors in membrane fluidity. This chain is Flotillin-like protein FloA, found in Alkaliphilus metalliredigens (strain QYMF).